The primary structure comprises 442 residues: 26S proteasome non-ATPase regulatory subunit 12 homolog A (442 aa).

Positions 6–137 (KLEATIDRLL…EAADLMQEVA (132 aa)) form a coiled coil. The PCI domain maps to 232–403 (EICRSYKAIY…GIVCFQIAKD (172 aa)).

Belongs to the proteasome subunit p55 family. Component of the 19S regulatory particle (RP/PA700) lid subcomplex of the 26S proteasome. The 26S proteasome is composed of a core protease (CP), known as the 20S proteasome, capped at one or both ends by the 19S regulatory particle (RP/PA700). The RP/PA700 complex is composed of at least 17 different subunits in two subcomplexes, the base and the lid, which form the portions proximal and distal to the 20S proteolytic core, respectively. As to expression, ubiquitous with highest expression in flowers.

Its subcellular location is the cytoplasm. The protein resides in the nucleus. Acts as a regulatory subunit of the 26 proteasome which is involved in the ATP-dependent degradation of ubiquitinated proteins. Required for gametogenesis and sporophyte development. Acts redundantly with RPN5B. The polypeptide is 26S proteasome non-ATPase regulatory subunit 12 homolog A (RPN5A) (Arabidopsis thaliana (Mouse-ear cress)).